A 349-amino-acid chain; its full sequence is 2-oxoglutarate and iron-dependent oxygenase domain-containing protein 2 (349 aa).

Residues 211–305 form the Fe2OG dioxygenase domain; sequence DSHRAFVVKY…RWNLILWMRA (95 aa). Positions 231, 233, and 286 each coordinate Fe cation. Position 296 (Arg296) interacts with 2-oxoglutarate.

It belongs to the OGFOD2 family. Requires Fe(2+) as cofactor. L-ascorbate serves as cofactor.

This is 2-oxoglutarate and iron-dependent oxygenase domain-containing protein 2 (ogfod2) from Xenopus tropicalis (Western clawed frog).